The chain runs to 270 residues: Probable 6-oxopurine nucleoside phosphorylase (270 aa).

Residues Ser-10 and 48 to 49 each bind phosphate; that span reads RH. Met-191 provides a ligand contact to substrate. A phosphate-binding site is contributed by Thr-192. Substrate is bound at residue 215-217; it reads NYA.

This sequence belongs to the PNP/MTAP phosphorylase family. MTAP subfamily. As to quaternary structure, homohexamer. Dimer of a homotrimer.

The catalysed reaction is a purine D-ribonucleoside + phosphate = a purine nucleobase + alpha-D-ribose 1-phosphate. It functions in the pathway purine metabolism; purine nucleoside salvage. In terms of biological role, purine nucleoside phosphorylase which is highly specific for 6-oxopurine nucleosides. Cleaves guanosine or inosine to respective bases and sugar-1-phosphate molecules. Involved in purine salvage. In Korarchaeum cryptofilum (strain OPF8), this protein is Probable 6-oxopurine nucleoside phosphorylase.